The sequence spans 876 residues: Probable inactive ATP-dependent zinc metalloprotease FTSHI 2, chloroplastic (876 aa).

Residues 1–20 (MACRFPLHSSSPSQFLSPEN) form a disordered region. A chloroplast-targeting transit peptide spans 1–32 (MACRFPLHSSSPSQFLSPENRQRLPRNYPSIS). The segment covering 8–19 (HSSSPSQFLSPE) has biased composition (polar residues). A helical membrane pass occupies residues 59–79 (LLAIPITLTIISASLAKPSFA). The disordered stretch occupies residues 256–276 (TMKAQKKQQERKKRKAVRKKK). Over residues 258–275 (KAQKKQQERKKRKAVRKK) the composition is skewed to basic residues. The chain crosses the membrane as a helical span at residues 304–324 (VATALGLVFFYIFYRVVVLNY). The segment at 350 to 370 (ELEREMEGIEEEDEEVEEGTG) is disordered. Positions 357–368 (GIEEEDEEVEEG) are enriched in acidic residues. 450-457 (GPPGVGKT) provides a ligand contact to ATP.

In the N-terminal section; belongs to the AAA ATPase family. The protein in the C-terminal section; belongs to the peptidase M41 family. As to quaternary structure, homooligomer. Interacts with FtsHi4.

The protein resides in the plastid. The protein localises to the chloroplast membrane. Required for plastid development during embryogenesis. Might be involved in chaperone functions or play a structural role in the thylakoid FtsH complex. In Arabidopsis thaliana (Mouse-ear cress), this protein is Probable inactive ATP-dependent zinc metalloprotease FTSHI 2, chloroplastic.